We begin with the raw amino-acid sequence, 242 residues long: MEVLKNIRIYPLSNFITSTKNYINLPNELRNLISEEQESKLGFLHIIESDFKPSVALQKLVNCTTGDEKILIIDIVSIWSQQKQRQHGAIYMNSLSCINITGLIVFLELLYDSPMDALRRCQVDNFNFQLRGIVIDNLSFLNFESDKNYDVINLSKFEKLFKILRKLREFLGCWIITKSFPTDFYNGIENTLVDKWSIKRKSGVTLYPTKLPDSYMKGMDLIIYREVVDGRPQYRRIAALEE.

As to quaternary structure, component of the SHU complex composed of at least CSM2, PSY3, SHU1 and SHU2.

It is found in the nucleus. Required for resistance to the DNA-damaging agents methyl methanesulfonate (MMS), cisplatin and oxaliplatin, but not to mitomycin C. Plays a role in protection against mutation accumulation. May be a component of the recombination-repair pathway. The polypeptide is Platinum sensitivity protein 3 (PSY3) (Saccharomyces cerevisiae (strain ATCC 204508 / S288c) (Baker's yeast)).